A 320-amino-acid polypeptide reads, in one-letter code: 4-hydroxyproline 2-epimerase (320 aa).

Cys-98 functions as the Proton acceptor in the catalytic mechanism. Substrate contacts are provided by residues 99-100, His-218, and Asp-242; that span reads GH. The active-site Proton donor is Cys-246. Residue 247–248 participates in substrate binding; that stretch reads GT.

This sequence belongs to the proline racemase family.

It catalyses the reaction trans-4-hydroxy-L-proline = cis-4-hydroxy-D-proline. In terms of biological role, catalyzes the epimerization of trans-4-hydroxy-L-proline (t4LHyp) to cis-4-hydroxy-D-proline (c4DHyp). Is likely involved in a degradation pathway that converts t4LHyp to alpha-ketoglutarate. Displays no proline racemase activity. This Burkholderia pseudomallei (strain 1710b) protein is 4-hydroxyproline 2-epimerase.